A 515-amino-acid chain; its full sequence is tRNA pseudouridine synthase Pus10 (515 aa).

Residues Cys21 and Cys24 each coordinate Zn(2+). Residues Lys42 to Glu85 adopt a coiled-coil conformation. Residues Gly55–Gly82 are disordered. Positions 96 and 99 each coordinate Zn(2+). The interval Thr291–Ser304 is RNA binding forefinger loop. Asp331 serves as the catalytic Nucleophile. The tract at residues Gln428–Arg443 is RNA binding thumb loop.

The protein belongs to the pseudouridine synthase Pus10 family.

It is found in the nucleus. Its subcellular location is the cytoplasm. The protein localises to the mitochondrion. The catalysed reaction is uridine(55) in tRNA = pseudouridine(55) in tRNA. The enzyme catalyses uridine(54) in tRNA = pseudouridine(54) in tRNA. In terms of biological role, protein with different functions depending on its subcellular location: involved in miRNA processing in the nucleus and acts as a tRNA pseudouridylate synthase in the cytoplasm. In the cytoplasm, acts as a pseudouridylate synthase by catalyzing synthesis of pseudouridine(54) and pseudouridine(55) from uracil-54 and uracil-55, respectively, in the psi GC loop of a subset of tRNAs. tRNA pseudouridylate synthase activity is enhanced by the presence of 1-methyladenosine at position 53-61 of tRNAs. Does not show tRNA pseudouridylate synthase activity in the nucleus. In the nucleus, promotes primary microRNAs (pri-miRNAs) processing independently of its RNA pseudouridylate synthase activity. Binds pri-miRNAs. The protein is tRNA pseudouridine synthase Pus10 of Xenopus laevis (African clawed frog).